The sequence spans 135 residues: Small ribosomal subunit protein bS16m/bS16c (135 aa).

The N-terminal 7 residues, 1 to 7, are a transit peptide targeting the chloroplast and mitochondrion; it reads MVVRIRL. The disordered stretch occupies residues 87–135; it reads PMVAMGRKGGARDTRPVDPMTGRYVDAENKTVNANDNQPKEEDTEAKSA. Residues 124 to 135 are compositionally biased toward basic and acidic residues; it reads QPKEEDTEAKSA.

Belongs to the bacterial ribosomal protein bS16 family. Component of the mitochondrial ribosome small subunit. As to expression, expressed at low levels in flowers, and, to a lower extent, in leaves, stems and roots.

Its subcellular location is the mitochondrion. It is found in the plastid. It localises to the chloroplast. This chain is Small ribosomal subunit protein bS16m/bS16c, found in Arabidopsis thaliana (Mouse-ear cress).